The chain runs to 293 residues: 4-hydroxy-tetrahydrodipicolinate synthase (293 aa).

A pyruvate-binding site is contributed by Thr46. Tyr133 (proton donor/acceptor) is an active-site residue. Catalysis depends on Lys161, which acts as the Schiff-base intermediate with substrate. Val202 contributes to the pyruvate binding site.

Belongs to the DapA family. Homotetramer; dimer of dimers.

The protein localises to the cytoplasm. It catalyses the reaction L-aspartate 4-semialdehyde + pyruvate = (2S,4S)-4-hydroxy-2,3,4,5-tetrahydrodipicolinate + H2O + H(+). It functions in the pathway amino-acid biosynthesis; L-lysine biosynthesis via DAP pathway; (S)-tetrahydrodipicolinate from L-aspartate: step 3/4. Catalyzes the condensation of (S)-aspartate-beta-semialdehyde [(S)-ASA] and pyruvate to 4-hydroxy-tetrahydrodipicolinate (HTPA). This Wolbachia pipientis subsp. Culex pipiens (strain wPip) protein is 4-hydroxy-tetrahydrodipicolinate synthase.